Here is a 98-residue protein sequence, read N- to C-terminus: NADH-ubiquinone oxidoreductase chain 4L (98 aa).

A run of 3 helical transmembrane segments spans residues 1–21 (MSLV…GLLM), 29–49 (ALLC…LTIL), and 61–81 (IILL…LVMV).

This sequence belongs to the complex I subunit 4L family. As to quaternary structure, core subunit of respiratory chain NADH dehydrogenase (Complex I) which is composed of 45 different subunits.

The protein resides in the mitochondrion inner membrane. It catalyses the reaction a ubiquinone + NADH + 5 H(+)(in) = a ubiquinol + NAD(+) + 4 H(+)(out). Core subunit of the mitochondrial membrane respiratory chain NADH dehydrogenase (Complex I) which catalyzes electron transfer from NADH through the respiratory chain, using ubiquinone as an electron acceptor. Part of the enzyme membrane arm which is embedded in the lipid bilayer and involved in proton translocation. The protein is NADH-ubiquinone oxidoreductase chain 4L (MT-ND4L) of Lagenorhynchus albirostris (White-beaked dolphin).